We begin with the raw amino-acid sequence, 353 residues long: UPF0283 membrane protein YcjF (353 aa).

A run of 3 helical transmembrane segments spans residues 70–90, 100–120, and 213–233; these read MVMGGLALFGASVVGQGVQWT, VALGGCAAGALIIGAGVGSVV, and ESTLMIAVSPLALVDMAFIAW.

Belongs to the UPF0283 family.

The protein localises to the cell inner membrane. This chain is UPF0283 membrane protein YcjF, found in Escherichia coli O7:K1 (strain IAI39 / ExPEC).